The primary structure comprises 375 residues: MTCPVIELAQQLIKRPSLSPHDEGCQALMIERLEAIGFTVEPMPFGDTLNFWAWRGEGQTLAFAGHTDVVPTGDEKRWDNPPFEPTIRDGMLYGRGAADMKGSLAAMVVAAERFVAANPHHQGRLAFLITSDEEASATHGTVKVVEALMARNERLDYCLVGEPSSTERVGDVVKNGRRGSITANLHIHGIQGHVAYPHLADNPVHRAMPALNELVAIEWDRGNEFFPPTSMQIANVQAGTGSNNVIPGEMFVQFNFRFSTESTDATIKQRVEELLERHQLNYSIEWRLSGQPFLTARGALVDAVVNAVEHYSELTPQLLTTGGTSDGRFIAQMGAQVVELGPVNATIHKVNECVHAADLQLLSRMYQRIMEQLVA.

Residue H66 participates in Zn(2+) binding. Residue D68 is part of the active site. D99 contributes to the Zn(2+) binding site. The active-site Proton acceptor is the E133. E134, E162, and H348 together coordinate Zn(2+).

Belongs to the peptidase M20A family. DapE subfamily. As to quaternary structure, homodimer. Zn(2+) serves as cofactor. It depends on Co(2+) as a cofactor.

The enzyme catalyses N-succinyl-(2S,6S)-2,6-diaminopimelate + H2O = (2S,6S)-2,6-diaminopimelate + succinate. It participates in amino-acid biosynthesis; L-lysine biosynthesis via DAP pathway; LL-2,6-diaminopimelate from (S)-tetrahydrodipicolinate (succinylase route): step 3/3. Catalyzes the hydrolysis of N-succinyl-L,L-diaminopimelic acid (SDAP), forming succinate and LL-2,6-diaminopimelate (DAP), an intermediate involved in the bacterial biosynthesis of lysine and meso-diaminopimelic acid, an essential component of bacterial cell walls. In Serratia proteamaculans (strain 568), this protein is Succinyl-diaminopimelate desuccinylase.